The sequence spans 412 residues: L-threonine:uridine-5'-aldehyde transaldolase (412 aa).

Residue Lys-229 is modified to N6-(pyridoxal phosphate)lysine.

It belongs to the SHMT family. Pyridoxal 5'-phosphate serves as cofactor.

The catalysed reaction is uridine-5'-aldehyde + L-threonine = (5'S,6'S)-C-glycyluridine + acetaldehyde. It functions in the pathway antibiotic biosynthesis. Its function is as follows. Transaldolase involved in the biosynthesis of the capuramycin-type nucleoside antibiotic A-102395. Catalyzes the condensation of L-threonine and uridine-5'-aldehyde to form 5'-C-glycyluridine (GlyU). This is L-threonine:uridine-5'-aldehyde transaldolase from Amycolatopsis sp.